The chain runs to 78 residues: Gas vesicle protein G (78 aa).

The protein belongs to the gas vesicle GvpG family.

The protein resides in the gas vesicle. Might be a minor component of the gas vesicle involved in nucleating their formation. Gas vesicles are hollow, gas filled proteinaceous nanostructures found in some microorganisms. It is not clear what function gas vesicles perform in soil bacteria. This chain is Gas vesicle protein G, found in Streptomyces sp. (strain CB03234).